The sequence spans 630 residues: Pentatricopeptide repeat-containing protein At1g63130, mitochondrial (630 aa).

A mitochondrion-targeting transit peptide spans 1–22 (MRRLFAISSTGNRFVHRSLLGK). PPR repeat units follow at residues 80–114 (SIVE…GISH), 115–149 (NLYT…GYEP), 150–184 (DIVT…GYQP), 185–219 (DSFT…GCQP), 220–254 (DLVT…KIEP), 255–289 (GVVI…GIRP), 290–324 (NVVT…KINP), 325–359 (NVVT…SIDP), 360–394 (DIFT…DCFP), 395–429 (NVVT…GLVG), 430–464 (NTVT…GVLP), 465–499 (DIMT…KMEP), 500–534 (DIYT…GVKP), 535–569 (NVVT…GPLP), and 570–604 (DSGT…RFVG).

It belongs to the PPR family. P subfamily.

The protein resides in the mitochondrion. This is Pentatricopeptide repeat-containing protein At1g63130, mitochondrial from Arabidopsis thaliana (Mouse-ear cress).